The sequence spans 256 residues: LexA repressor (256 aa).

The interval 1–31 (MTSQGRGTRRGGTRGNVRAFPEGPTDAGLTP) is disordered. Positions 53–73 (VREIGEAVGLTSTSSVAHQLK) form a DNA-binding region, H-T-H motif. Catalysis depends on for autocatalytic cleavage activity residues Ser-180 and Lys-217.

This sequence belongs to the peptidase S24 family. As to quaternary structure, homodimer.

The catalysed reaction is Hydrolysis of Ala-|-Gly bond in repressor LexA.. Functionally, represses a number of genes involved in the response to DNA damage (SOS response), including recA and lexA. In the presence of single-stranded DNA, RecA interacts with LexA causing an autocatalytic cleavage which disrupts the DNA-binding part of LexA, leading to derepression of the SOS regulon and eventually DNA repair. The polypeptide is LexA repressor (Frankia casuarinae (strain DSM 45818 / CECT 9043 / HFP020203 / CcI3)).